Here is a 307-residue protein sequence, read N- to C-terminus: Haloalkane dehalogenase (307 aa).

Residues 34–158 (PVLFLHGNPT…FQAFRTADVG (125 aa)) form the AB hydrolase-1 domain. Asp-106 serves as the catalytic Nucleophile. The active-site Proton donor is Glu-130. His-272 acts as the Proton acceptor in catalysis.

The protein belongs to the haloalkane dehalogenase family. Type 2 subfamily. Monomer.

The enzyme catalyses 1-haloalkane + H2O = a halide anion + a primary alcohol + H(+). It participates in xenobiotic degradation; 1,2-dibromoethane degradation. Its function is as follows. Catalyzes hydrolytic cleavage of carbon-halogen bonds in halogenated aliphatic compounds, leading to the formation of the corresponding primary alcohols, halide ions and protons. Has a broad substrate specificity, which includes mono- and di-chlorinated and brominated alkanes. The highest activity was found with 1,2-dibromoethane, whereas low activity was measured with the analog 1,2-dichloroethane. The sequence is that of Haloalkane dehalogenase (dhaAF) from Mycobacterium sp. (strain GP1).